Reading from the N-terminus, the 926-residue chain is Serine/threonine-protein kinase pakE (926 aa).

Polar residues predominate over residues 36–55 (SSRELPTQDSSTKTSNITTP). Disordered regions lie at residues 36–257 (SSRE…RPKL) and 546–576 (QLNN…TTTT). Over residues 56–107 (NNNNNNNNNNNNNNNNNNNNNNNNNNNNNNNNNNNNNNNNNNNNNNNNNNNN) the composition is skewed to low complexity. Residues 108-117 (TPTSLNSSWK) show a composition bias toward polar residues. Residues 134–173 (NNNNNVGSPNNQSTSQTNHQQPPPQQLQQQQSLSSTSTPS) are compositionally biased toward low complexity. A compositionally biased stretch (polar residues) spans 183–204 (RRNVTSPNLTRSDPTVPITNSR). Residues 215–253 (PQFQLNNLNFDDNNDHSTTTTNNNNNNNNNNSNNNNNNN) are compositionally biased toward low complexity. Residues 534–567 (LDFEKELKENQQQLNNNNNNNNNNNNNNNNNNNN) are a coiled coil. The region spanning 650-903 (FEFKEKLGQG…VIDLLSHDFI (254 aa)) is the Protein kinase domain. Residues 656–664 (LGQGGYGAV) and lysine 679 each bind ATP. The active-site Proton acceptor is aspartate 771.

This sequence belongs to the protein kinase superfamily. STE Ser/Thr protein kinase family. STE20 subfamily. Mg(2+) serves as cofactor.

The enzyme catalyses L-seryl-[protein] + ATP = O-phospho-L-seryl-[protein] + ADP + H(+). The catalysed reaction is L-threonyl-[protein] + ATP = O-phospho-L-threonyl-[protein] + ADP + H(+). Functionally, may play a role in responding to changes in chemoattractant levels. This is Serine/threonine-protein kinase pakE from Dictyostelium discoideum (Social amoeba).